Reading from the N-terminus, the 283-residue chain is Pyridoxal kinase PdxY (283 aa).

Ser-8 contacts substrate. Positions 110 and 147 each coordinate ATP. Substrate is bound at residue Asp-219.

Belongs to the pyridoxine kinase family. PdxY subfamily. In terms of assembly, homodimer. The cofactor is Mg(2+).

The catalysed reaction is pyridoxal + ATP = pyridoxal 5'-phosphate + ADP + H(+). It participates in cofactor metabolism; pyridoxal 5'-phosphate salvage; pyridoxal 5'-phosphate from pyridoxal: step 1/1. Its function is as follows. Pyridoxal kinase involved in the salvage pathway of pyridoxal 5'-phosphate (PLP). Catalyzes the phosphorylation of pyridoxal to PLP. In Leifsonia xyli subsp. xyli (strain CTCB07), this protein is Pyridoxal kinase PdxY.